A 127-amino-acid chain; its full sequence is Fluoride-specific ion channel FluC (127 aa).

4 consecutive transmembrane segments (helical) span residues 4-24 (SILA…FLGL), 36-56 (GTLL…AYFA), 68-88 (LIIT…AEVV), and 99-119 (AAGA…LGLF). Residues Gly-75 and Thr-78 each coordinate Na(+).

Belongs to the fluoride channel Fluc/FEX (TC 1.A.43) family.

The protein localises to the cell inner membrane. The catalysed reaction is fluoride(in) = fluoride(out). With respect to regulation, na(+) is not transported, but it plays an essential structural role and its presence is essential for fluoride channel function. Its function is as follows. Fluoride-specific ion channel. Important for reducing fluoride concentration in the cell, thus reducing its toxicity. In Pseudomonas paraeruginosa (strain DSM 24068 / PA7) (Pseudomonas aeruginosa (strain PA7)), this protein is Fluoride-specific ion channel FluC.